The sequence spans 237 residues: MOB kinase activator 2 (237 aa).

Residues 1-21 (MDWLMGKSKAKPNGKKPAAEE) are disordered. Residues Cys-78, Cys-83, His-157, and His-162 each contribute to the Zn(2+) site. A compositionally biased stretch (gly residues) spans 217–229 (GGSGDGAGSGGPG). The interval 217–237 (GGSGDGAGSGGPGAQNHVKER) is disordered.

The protein belongs to the MOB1/phocein family. Binds STK38 and STK38L. Post-translationally, phosphorylated.

The protein resides in the nucleus. The protein localises to the cytoplasm. It localises to the perinuclear region. In terms of biological role, stimulates the autophosphorylation and kinase activity of STK38 and STK38L. The chain is MOB kinase activator 2 (MOB2) from Homo sapiens (Human).